Here is a 365-residue protein sequence, read N- to C-terminus: tRNA/tmRNA (uracil-C(5))-methyltransferase (365 aa).

S-adenosyl-L-methionine contacts are provided by Gln-189, Tyr-217, Asn-222, Glu-238, and Asp-298. Cys-323 serves as the catalytic Nucleophile. The active-site Proton acceptor is the Glu-357.

This sequence belongs to the class I-like SAM-binding methyltransferase superfamily. RNA M5U methyltransferase family. TrmA subfamily.

It carries out the reaction uridine(54) in tRNA + S-adenosyl-L-methionine = 5-methyluridine(54) in tRNA + S-adenosyl-L-homocysteine + H(+). The catalysed reaction is uridine(341) in tmRNA + S-adenosyl-L-methionine = 5-methyluridine(341) in tmRNA + S-adenosyl-L-homocysteine + H(+). Functionally, dual-specificity methyltransferase that catalyzes the formation of 5-methyluridine at position 54 (m5U54) in all tRNAs, and that of position 341 (m5U341) in tmRNA (transfer-mRNA). This is tRNA/tmRNA (uracil-C(5))-methyltransferase from Shewanella sediminis (strain HAW-EB3).